We begin with the raw amino-acid sequence, 84 residues long: Cell division topological specificity factor (84 aa).

Belongs to the MinE family.

Prevents the cell division inhibition by proteins MinC and MinD at internal division sites while permitting inhibition at polar sites. This ensures cell division at the proper site by restricting the formation of a division septum at the midpoint of the long axis of the cell. In Pseudomonas entomophila (strain L48), this protein is Cell division topological specificity factor.